Here is a 371-residue protein sequence, read N- to C-terminus: Queuine tRNA-ribosyltransferase (371 aa).

The active-site Proton acceptor is the aspartate 89. Residues aspartate 89 to phenylalanine 93, aspartate 143, glutamine 185, and glycine 212 contribute to the substrate site. The interval glycine 243–aspartate 249 is RNA binding. The active-site Nucleophile is the aspartate 262. Residues threonine 267–arginine 271 form an RNA binding; important for wobble base 34 recognition region. 4 residues coordinate Zn(2+): cysteine 300, cysteine 302, cysteine 305, and histidine 331.

It belongs to the queuine tRNA-ribosyltransferase family. As to quaternary structure, homodimer. Within each dimer, one monomer is responsible for RNA recognition and catalysis, while the other monomer binds to the replacement base PreQ1. The cofactor is Zn(2+).

It catalyses the reaction 7-aminomethyl-7-carbaguanine + guanosine(34) in tRNA = 7-aminomethyl-7-carbaguanosine(34) in tRNA + guanine. It participates in tRNA modification; tRNA-queuosine biosynthesis. Catalyzes the base-exchange of a guanine (G) residue with the queuine precursor 7-aminomethyl-7-deazaguanine (PreQ1) at position 34 (anticodon wobble position) in tRNAs with GU(N) anticodons (tRNA-Asp, -Asn, -His and -Tyr). Catalysis occurs through a double-displacement mechanism. The nucleophile active site attacks the C1' of nucleotide 34 to detach the guanine base from the RNA, forming a covalent enzyme-RNA intermediate. The proton acceptor active site deprotonates the incoming PreQ1, allowing a nucleophilic attack on the C1' of the ribose to form the product. After dissociation, two additional enzymatic reactions on the tRNA convert PreQ1 to queuine (Q), resulting in the hypermodified nucleoside queuosine (7-(((4,5-cis-dihydroxy-2-cyclopenten-1-yl)amino)methyl)-7-deazaguanosine). This is Queuine tRNA-ribosyltransferase from Azotobacter vinelandii (strain DJ / ATCC BAA-1303).